The following is an 830-amino-acid chain: ABC transporter G family member STR (830 aa).

At 1–551 (MAKFKRTDTN…RTTLNVIRTP (551 aa)) the chain is on the cytoplasmic side. An ABC transporter domain is found at 46-297 (LEFNNLSYSV…LAGFARPVPD (252 aa)). 90 to 97 (GPSGAGKS) lines the ATP pocket. Disordered stretches follow at residues 333–356 (DQAAKTPVRKPPKTPKIPRTPYAK), 368–422 (SHFS…SMQS), and 471–491 (SMSSSQFSMTQQTPGPGNKTP). Over residues 368-378 (SHFSTGNMNSQ) the composition is skewed to polar residues. A compositionally biased stretch (acidic residues) spans 395 to 405 (DYEDDDDEDEF). Low complexity predominate over residues 471–483 (SMSSSQFSMTQQT). Residues 552 to 572 (ELFLSREIVLTVMGLVLSSFF) form a helical membrane-spanning segment. At 573–588 (KKLSHFDFKTINHLLN) the chain is on the extracellular side. A helical transmembrane segment spans residues 589–609 (FYIFTICLVFFSSNDAVPTFI). The Cytoplasmic portion of the chain corresponds to 610 to 630 (QERFIFIRETSHNAYRASSYV). A helical membrane pass occupies residues 631 to 651 (ISSLIVYLPFFAIQGFTFAGI). Residues 652–661 (TQYILHLNSS) are Extracellular-facing. Residue Asn659 is glycosylated (N-linked (GlcNAc...) asparagine). A helical membrane pass occupies residues 662–682 (ILSFWLILYSSLVTSNAYVML). The Cytoplasmic segment spans residues 683–690 (VSALVPSY). Residues 691–711 (ITGYAVVIATTALFFLTCGFF) form a helical membrane-spanning segment. Over 712–798 (LKRTQIPLVW…LFSMDIREEN (87 aa)) the chain is Extracellular. N-linked (GlcNAc...) asparagine glycans are attached at residues Asn771 and Asn780. The chain crosses the membrane as a helical span at residues 799-819 (IWLDIVILLAWGVLYRLFFYV). The Cytoplasmic segment spans residues 820 to 830 (VLRFYSKNERK).

Belongs to the ABC transporter superfamily. ABCG family. Stunted arbuscule (STR) subfamily. Heterodimerizes with STR2; the resulting transporter is located in the peri-arbuscular membrane.

The protein localises to the cell membrane. In terms of biological role, together with STR2, required for arbuscule development in arbuscular mycorrhizal (AM) symbiosis. The protein is ABC transporter G family member STR of Petunia hybrida (Petunia).